The following is a 229-amino-acid chain: Non-structural protein P8 (229 aa).

Transmembrane regions (helical) follow at residues 119–139 (IIHMTLLIAAVVALLTSVCTL) and 162–182 (SLNPMLGVVNLGATFLMMVCA).

The protein belongs to the orbivirus NS3 family. As to quaternary structure, forms homooligomers via coiled-coil motif. Interacts with host OPTN; this interaction inhibits innate immune response.

The protein resides in the host cell membrane. The protein localises to the host Golgi apparatus. Functionally, plays a role in the inhibition of host innate immune response. Interacts with host OPTN and thus inhibits the recruitment of TBK1 to the host Golgi apparatus. In turn, downstream partner IRF3 cannot be activated and IFN-beta production is impaired. Its function is as follows. Facilitates viral particle release either by increasing plasma membrane permeability through a viroporin-like activity or by viral budding. The protein is Non-structural protein P8 (Segment-10) of Antilocapra americana (Pronghorn).